The sequence spans 362 residues: Protein RecA (362 aa).

Residue 77–84 (GPESSGKT) participates in ATP binding.

Belongs to the RecA family.

The protein localises to the cytoplasm. Functionally, can catalyze the hydrolysis of ATP in the presence of single-stranded DNA, the ATP-dependent uptake of single-stranded DNA by duplex DNA, and the ATP-dependent hybridization of homologous single-stranded DNAs. It interacts with LexA causing its activation and leading to its autocatalytic cleavage. The protein is Protein RecA of Rhizobium etli (strain ATCC 51251 / DSM 11541 / JCM 21823 / NBRC 15573 / CFN 42).